Consider the following 301-residue polypeptide: MAKPLSITSSLPTFSVTWRAYFEMTKPKVVALMLLTVLVGMCLAVPHAVPVQPLLAGMLGIAMMAGSAAALNHLIDRRIDGLMARTYNRPLPKGRISATRALIFAASLGSLGFIVLYSLVNPLTAWLTFASLIGYALVYTAYLKRATSQNIVIGGLAGAMPPLLGWTAVTNEFHGHALLLVIIIFTWTPPHFWALAIHRRAEYAKVDIPMLPVTHGVEFTKTCILLYTVLLAIACLLPVLVGMCGPVYFVCSSLLSTGFIYKAWQLKYRDHDGLAMQVFRFSIYHLMLLFMALLLDHYLWN.

The next 9 helical transmembrane spans lie at 29 to 49 (VVALMLLTVLVGMCLAVPHAV), 51 to 71 (VQPLLAGMLGIAMMAGSAAAL), 101 to 121 (ALIFAASLGSLGFIVLYSLVN), 123 to 143 (LTAWLTFASLIGYALVYTAYL), 150 to 170 (NIVIGGLAGAMPPLLGWTAVT), 177 to 197 (ALLLVIIIFTWTPPHFWALAI), 223 to 243 (CILLYTVLLAIACLLPVLVGM), 244 to 264 (CGPVYFVCSSLLSTGFIYKAW), and 274 to 294 (LAMQVFRFSIYHLMLLFMALL).

It belongs to the UbiA prenyltransferase family. Protoheme IX farnesyltransferase subfamily.

Its subcellular location is the cell inner membrane. It carries out the reaction heme b + (2E,6E)-farnesyl diphosphate + H2O = Fe(II)-heme o + diphosphate. Its pathway is porphyrin-containing compound metabolism; heme O biosynthesis; heme O from protoheme: step 1/1. In terms of biological role, converts heme B (protoheme IX) to heme O by substitution of the vinyl group on carbon 2 of heme B porphyrin ring with a hydroxyethyl farnesyl side group. This is Protoheme IX farnesyltransferase 1 from Shewanella baltica (strain OS195).